Here is a 366-residue protein sequence, read N- to C-terminus: Inhibin alpha chain (366 aa).

A signal peptide spans 1-18 (MVLHLLLFLLLTPQGGHS). Positions 19–61 (CQGLELARELVLAKVRALFLDALGPPAVTREGGDPGVRRLPRR) are excised as a propeptide. The propeptide at 62–232 (HALGGFTHRG…PPSGGERARR (171 aa)) is inhibin alpha N-terminal region. 2 N-linked (GlcNAc...) asparagine glycosylation sites follow: asparagine 146 and asparagine 268. Disulfide bonds link cysteine 262–cysteine 328, cysteine 291–cysteine 363, and cysteine 295–cysteine 365. Asparagine 302 carries an N-linked (GlcNAc...) asparagine; partial glycan.

It belongs to the TGF-beta family. Dimeric, linked by one or more disulfide bonds. Activin B is a dimer of alpha and beta-B. Inhibin A is a dimer of alpha and beta-A. Inhibin B is a dimer of alpha and beta-B. Interacts with TGFBR3L; this interaction regulates female fertility. Post-translationally, proteolytic processing yields a number of bioactive forms. The 20/23 kDa forms consist solely of the mature alpha chain, the 26/29 kDa forms consist of the most N-terminal propeptide linked through a disulfide bond to the mature alpha chain, the 50/53 kDa forms encompass the entire proprotein. Each type can be furthermore either mono- or diglycosylated, causing the mass difference. As to expression, originally found in ovary (granulosa cells) and testis (Sertoli cells), but widely distributed in many tissues including brain and placenta. In adrenal cortex expression is limited to the zona reticularis and the innermost zona fasciculata in the normal gland, extending centripetally into the zona fasciculata in hyperplasia. Also found in adrenocortical tumors. Also expressed in prostate epithelium of benign prostatic hyperplasia, in regions of basal cell hyperplasia and in nonmalignant regions of high grade prostate cancer. Only circulating inhibin B is found in male, whereas circulating inhibins A and B are found in female.

It is found in the secreted. In terms of biological role, inhibins and activins inhibit and activate, respectively, the secretion of follitropin by the pituitary gland. Inhibins/activins are involved in regulating a number of diverse functions such as hypothalamic and pituitary hormone secretion, gonadal hormone secretion, germ cell development and maturation, erythroid differentiation, insulin secretion, nerve cell survival, embryonic axial development or bone growth, depending on their subunit composition. Inhibins appear to oppose the functions of activins. Inhibin A is a dimer of alpha/INHA and beta-A/INHBA that functions as a feedback regulator in the hypothalamic-pituitary-gonadal (HPG) axis. Inhibits the secretion of FSH from the anterior pituitary gland by acting on pituitary gonadotrope cells. Antagonizes activin A by binding to the proteoglycan, betaglycan, and forming a stable complex with and, thereby, sequestering type II activin receptors while excluding type I receptor. Functionally, inhibin B is a dimer of alpha and beta-B that plays a crucial role in the regulation of the reproductive system by inhibiting the secretion of follicle-stimulating hormone (FSH) from the anterior pituitary gland. Thereby, maintains reproductive homeostasis in both males and females. Acts as a more potent suppressor of FSH release than inhibin A. Functions as competitive receptor antagonist binding activin type II receptors with high affinity in the presence of the TGF-beta type III coreceptor/TGFBR3L. This Homo sapiens (Human) protein is Inhibin alpha chain (INHA).